A 210-amino-acid polypeptide reads, in one-letter code: Large ribosomal subunit protein uL3 (210 aa).

A disordered region spans residues 126-167 (WGFQRGPSGHGSKNIREPGSTGNATFPGRVIKGKKMPGQKGN). Basic residues predominate over residues 156-167 (IKGKKMPGQKGN).

The protein belongs to the universal ribosomal protein uL3 family. In terms of assembly, part of the 50S ribosomal subunit. Forms a cluster with proteins L14 and L19.

In terms of biological role, one of the primary rRNA binding proteins, it binds directly near the 3'-end of the 23S rRNA, where it nucleates assembly of the 50S subunit. This Syntrophobacter fumaroxidans (strain DSM 10017 / MPOB) protein is Large ribosomal subunit protein uL3.